The primary structure comprises 357 residues: NADH-quinone oxidoreductase subunit H (357 aa).

8 helical membrane-spanning segments follow: residues valine 18–leucine 38, valine 92–valine 112, leucine 127–alanine 147, valine 165–leucine 185, phenylalanine 206–valine 226, isoleucine 268–isoleucine 288, isoleucine 294–phenylalanine 314, and leucine 329–methionine 349.

Belongs to the complex I subunit 1 family. As to quaternary structure, NDH-1 is composed of 14 different subunits. Subunits NuoA, H, J, K, L, M, N constitute the membrane sector of the complex.

Its subcellular location is the cell inner membrane. It carries out the reaction a quinone + NADH + 5 H(+)(in) = a quinol + NAD(+) + 4 H(+)(out). Its function is as follows. NDH-1 shuttles electrons from NADH, via FMN and iron-sulfur (Fe-S) centers, to quinones in the respiratory chain. The immediate electron acceptor for the enzyme in this species is believed to be ubiquinone. Couples the redox reaction to proton translocation (for every two electrons transferred, four hydrogen ions are translocated across the cytoplasmic membrane), and thus conserves the redox energy in a proton gradient. This subunit may bind ubiquinone. This is NADH-quinone oxidoreductase subunit H from Bordetella bronchiseptica (strain ATCC BAA-588 / NCTC 13252 / RB50) (Alcaligenes bronchisepticus).